The following is a 118-amino-acid chain: Small ribosomal subunit protein uS13 (118 aa).

The interval 94–118 is disordered; sequence SLPLRGQRTKTNARTRKGPRKPIRK.

Belongs to the universal ribosomal protein uS13 family. As to quaternary structure, part of the 30S ribosomal subunit. Forms a loose heterodimer with protein S19. Forms two bridges to the 50S subunit in the 70S ribosome.

Its function is as follows. Located at the top of the head of the 30S subunit, it contacts several helices of the 16S rRNA. In the 70S ribosome it contacts the 23S rRNA (bridge B1a) and protein L5 of the 50S subunit (bridge B1b), connecting the 2 subunits; these bridges are implicated in subunit movement. Contacts the tRNAs in the A and P-sites. The chain is Small ribosomal subunit protein uS13 from Shewanella sediminis (strain HAW-EB3).